The primary structure comprises 444 residues: Chromosomal replication initiator protein DnaA (444 aa).

A domain I, interacts with DnaA modulators region spans residues 1–73 (MDSSAQQLWH…AEVVQDIVGY (73 aa)). Residues 73 to 104 (YPVEIQLTAQQGDLIAIFQPHTSLESELSPTN) form a domain II region. The segment at 105–321 (QLNPKYNFSR…GALIRATTYI (217 aa)) is domain III, AAA+ region. Gly149, Gly151, Lys152, and Thr153 together coordinate ATP. The interval 322 to 444 (SISGLPMTVE…ERINSLSRNQ (123 aa)) is domain IV, binds dsDNA.

The protein belongs to the DnaA family. In terms of assembly, oligomerizes as a right-handed, spiral filament on DNA at oriC.

It is found in the cytoplasm. Functionally, plays an essential role in the initiation and regulation of chromosomal replication. ATP-DnaA binds to the origin of replication (oriC) to initiate formation of the DNA replication initiation complex once per cell cycle. Binds the DnaA box (a 9 base pair repeat at the origin) and separates the double-stranded (ds)DNA. Forms a right-handed helical filament on oriC DNA; dsDNA binds to the exterior of the filament while single-stranded (ss)DNA is stabiized in the filament's interior. The ATP-DnaA-oriC complex binds and stabilizes one strand of the AT-rich DNA unwinding element (DUE), permitting loading of DNA polymerase. After initiation quickly degrades to an ADP-DnaA complex that is not apt for DNA replication. Binds acidic phospholipids. The protein is Chromosomal replication initiator protein DnaA of Microcystis aeruginosa (strain NIES-843 / IAM M-2473).